Here is a 119-residue protein sequence, read N- to C-terminus: MSIRTERVASLLQQELGAILQKELPRSGPIITVVEVKITADLSIARAYVSIIGTPEEQQEAMALLQDKTKSIRKILSSKIRHHFRRIPELEFHEDHLYERANRIEQLLSGVRKSSAENV.

Belongs to the RbfA family. In terms of assembly, monomer. Binds 30S ribosomal subunits, but not 50S ribosomal subunits or 70S ribosomes.

It localises to the cytoplasm. Its function is as follows. One of several proteins that assist in the late maturation steps of the functional core of the 30S ribosomal subunit. Associates with free 30S ribosomal subunits (but not with 30S subunits that are part of 70S ribosomes or polysomes). Required for efficient processing of 16S rRNA. May interact with the 5'-terminal helix region of 16S rRNA. This is Ribosome-binding factor A from Pelodictyon phaeoclathratiforme (strain DSM 5477 / BU-1).